Reading from the N-terminus, the 466-residue chain is MAHVNHYDVIVIGSGPGGEGAAMGLTKAGLNVAIVEKESSVGGGCTHWGTIPSKALRHAVSRIIEFNSNPLFCRNNTSLHATFSDILGHAKTVIDKQTRLRQGFYDRNDCTLLFGTARFIDTHSIAVMQNDGTEETYSADKFVIATGSRPYRPSDVDFLHERIYDSDSILSLKHDPRHIIIYGAGVIGCEYASIFRGLGVKTDLINTRDRLLEFLDNEVSDALSYHFWNSGVVIRNDETYEKIEGTEDGVIIHLQSGKKMRADCLLYANGRTGNTDKLSLDVVGLESDSRGQLKVNRNYQTAVEHIYAVGDVIGYPSLASAAYDQGRFVAQAITKGQAENYLIEDIPTGIYTIPEISSVGKTEQELTAAKVPYEVGRSSFKHLARAQIAGKDVGSLKILFHRETKEILGIHCFGERAAEIIHIGQAIMEQKGQANTIEYFVNTTFNYPTMAEAYRVAALNGLNRLF.

Position 36–45 (36–45 (EKESSVGGGC)) interacts with FAD.

It belongs to the class-I pyridine nucleotide-disulfide oxidoreductase family. The cofactor is FAD.

It is found in the cytoplasm. The enzyme catalyses NAD(+) + NADPH = NADH + NADP(+). Functionally, conversion of NADPH, generated by peripheral catabolic pathways, to NADH, which can enter the respiratory chain for energy generation. This is Soluble pyridine nucleotide transhydrogenase from Vibrio parahaemolyticus serotype O3:K6 (strain RIMD 2210633).